We begin with the raw amino-acid sequence, 145 residues long: Large ribosomal subunit protein uL13 (145 aa).

This sequence belongs to the universal ribosomal protein uL13 family. In terms of assembly, part of the 50S ribosomal subunit.

This protein is one of the early assembly proteins of the 50S ribosomal subunit, although it is not seen to bind rRNA by itself. It is important during the early stages of 50S assembly. In Halobacterium salinarum (strain ATCC 700922 / JCM 11081 / NRC-1) (Halobacterium halobium), this protein is Large ribosomal subunit protein uL13.